The sequence spans 232 residues: Lipoprotein-releasing system ATP-binding protein LolD (232 aa).

Positions 6-231 (ISCENLNKVY…KLTIKESQHV (226 aa)) constitute an ABC transporter domain. ATP is bound at residue 42 to 49 (GSSGSGKS).

This sequence belongs to the ABC transporter superfamily. Lipoprotein translocase (TC 3.A.1.125) family. As to quaternary structure, the complex is composed of two ATP-binding proteins (LolD) and two transmembrane proteins (LolC and LolE).

The protein localises to the cell inner membrane. In terms of biological role, part of the ABC transporter complex LolCDE involved in the translocation of mature outer membrane-directed lipoproteins, from the inner membrane to the periplasmic chaperone, LolA. Responsible for the formation of the LolA-lipoprotein complex in an ATP-dependent manner. The polypeptide is Lipoprotein-releasing system ATP-binding protein LolD (Pseudoalteromonas translucida (strain TAC 125)).